Here is a 208-residue protein sequence, read N- to C-terminus: Component of Sp100-rs (208 aa).

Residues 6-121 (GSPRMSTEQE…LRRSFECGAK (116 aa)) form the HSR domain.

The protein is Component of Sp100-rs (Csprs) of Mus musculus (Mouse).